The following is a 450-amino-acid chain: uncharacterized protein (450 aa).

The next 12 helical transmembrane spans lie at 10-30, 53-73, 95-115, 120-140, 148-168, 199-219, 242-262, 267-287, 302-322, 343-363, 378-398, and 428-448; these read IIVL…LVIA, LGGG…AIAI, TAGN…LFAI, LLPV…SIFN, AVAC…PVGF, LAML…IFIT, IANI…ATFA, TSST…CGIF, LMAM…VINA, IAAL…GSSF, LSFG…AALG, and VVPT…IAAM.

It is found in the cell membrane. This is an uncharacterized protein from Haemophilus influenzae (strain ATCC 51907 / DSM 11121 / KW20 / Rd).